Consider the following 374-residue polypeptide: UDP-N-acetylglucosamine--N-acetylmuramyl-(pentapeptide) pyrophosphoryl-undecaprenol N-acetylglucosamine transferase (374 aa).

UDP-N-acetyl-alpha-D-glucosamine contacts are provided by residues 10-12, Asn124, Arg166, Ser196, and Gln294; that span reads TGG.

Belongs to the glycosyltransferase 28 family. MurG subfamily.

The protein localises to the cell membrane. The catalysed reaction is di-trans,octa-cis-undecaprenyl diphospho-N-acetyl-alpha-D-muramoyl-L-alanyl-D-glutamyl-meso-2,6-diaminopimeloyl-D-alanyl-D-alanine + UDP-N-acetyl-alpha-D-glucosamine = di-trans,octa-cis-undecaprenyl diphospho-[N-acetyl-alpha-D-glucosaminyl-(1-&gt;4)]-N-acetyl-alpha-D-muramoyl-L-alanyl-D-glutamyl-meso-2,6-diaminopimeloyl-D-alanyl-D-alanine + UDP + H(+). It participates in cell wall biogenesis; peptidoglycan biosynthesis. Its function is as follows. Cell wall formation. Catalyzes the transfer of a GlcNAc subunit on undecaprenyl-pyrophosphoryl-MurNAc-pentapeptide (lipid intermediate I) to form undecaprenyl-pyrophosphoryl-MurNAc-(pentapeptide)GlcNAc (lipid intermediate II). The protein is UDP-N-acetylglucosamine--N-acetylmuramyl-(pentapeptide) pyrophosphoryl-undecaprenol N-acetylglucosamine transferase of Symbiobacterium thermophilum (strain DSM 24528 / JCM 14929 / IAM 14863 / T).